The sequence spans 926 residues: Protein transport protein SEC24-2 (926 aa).

A disordered region spans residues 1–54 (MSHHKKRVYPQAQAQYGQSATPLQQPAQLVPPQDPAAAGMSYAQMGMPPQGAAA). Low complexity predominate over residues 20-54 (ATPLQQPAQLVPPQDPAAAGMSYAQMGMPPQGAAA). 4 residues coordinate Zn(2+): Cys231, Cys234, Cys253, and Cys256. The zinc finger-like stretch occupies residues 231–256 (CRRCRSYMNPFITFIEQGRRWRCNFC).

It belongs to the SEC23/SEC24 family. SEC24 subfamily. The COPII coat is composed of at least 5 proteins: the SEC23/24 complex, the SEC13/31 complex, and the protein SAR1. Golgi apparatus membrane; Peripheral membrane protein; Cytoplasmic side.

Its subcellular location is the cytoplasm. The protein localises to the cytoplasmic vesicle. It localises to the COPII-coated vesicle membrane. The protein resides in the endoplasmic reticulum membrane. It is found in the golgi apparatus membrane. Functionally, component of the coat protein complex II (COPII) which promotes the formation of transport vesicles from the endoplasmic reticulum (ER). The coat has two main functions, the physical deformation of the endoplasmic reticulum membrane into vesicles and the selection of cargo molecules. This Saccharomyces uvarum (strain ATCC 76518 / CBS 7001 / CLIB 283 / NBRC 10550 / MCYC 623 / NCYC 2669 / NRRL Y-11845) (Yeast) protein is Protein transport protein SEC24-2 (SEC242).